A 3616-amino-acid chain; its full sequence is Replicase polyprotein 1ab (3616 aa).

Residues 8–28 form a C4-type; atypical zinc finger; sequence CLCTPNARVFWEHGQVYCTRC. The Peptidase C31 domain occupies 69–181; sequence ECRPGGLCWL…KGLCPFSDAR (113 aa). Catalysis depends on for Nsp1-alpha papain-like cysteine proteinase activity residues cysteine 76 and histidine 147. The region spanning 262 to 381 is the Peptidase C32 domain; the sequence is NDTKFSKCWE…FRFQTRKYYG (120 aa). Catalysis depends on for Nsp1-beta papain-like cysteine proteinase activity residues cysteine 269 and histidine 340. Residues 381-486 form the Peptidase C33 domain; the sequence is GYSPPGDGAC…RGVCGGECKF (106 aa). Catalysis depends on for Nsp2 cysteine proteinase activity residues cysteine 390 and histidine 456. Disordered regions lie at residues 672–706 and 883–912; these read SRAL…REVP and PLKS…GAPR. Positions 676–690 are enriched in basic residues; that stretch reads KSAKPKRKRNKKKKT. Residues 903 to 912 show a composition bias toward polar residues; that stretch reads DQLSQDGAPR. 9 helical membrane passes run 942-962, 977-997, 1010-1030, 1060-1080, 1085-1105, 1289-1309, 1364-1384, 1386-1406, and 1425-1445; these read WLNH…SVVL, LFCL…FIPL, LSVF…VLPE, HIGV…VGGP, FYFL…AVAL, VADF…SAWL, ALMI…SLLV, VICV…VIAF, and VQFF…VILI. An HD1 region spans residues 981 to 1105; sequence CCVLLCFHFP…LGLVFLAVAL (125 aa). An HD2 region spans residues 1289–1448; it reads VADFVCLGLY…AVAVILISSW (160 aa). Residues 1513–1714 enclose the Peptidase S32 domain; it reads GSLRTRGCAK…AVVESLPTPE (202 aa). Active-site charge relay system; for 3C-like serine proteinase activity residues include histidine 1551, aspartate 1576, and serine 1628. The next 4 helical transmembrane spans lie at 1715–1735, 1737–1757, 1761–1781, and 1832–1852; these read GALS…LIHV, FVPV…VVLA, FSFA…VLLL, and SKEI…LSLF. The interval 1737-1852 is HD3; that stretch reads FVPVIAVAFF…HVLALLLSLF (116 aa). The NiRAN domain maps to 2194 to 2352; the sequence is SLNGLQQSSA…LPYKLHPVRG (159 aa). In terms of domain architecture, RdRp catalytic spans 2590–2724; that stretch reads GRCLEADLAS…YNESDELPNY (135 aa). Residues 2844 to 2907 form the AV ZBD domain; it reads KKKCRTCAHC…SSAMNLNTEL (64 aa). Positions 2850, 2853, 2863, 2868, 2871, 2873, 2875, 2877, 2884, 2886, 2893, and 2896 each coordinate Zn(2+). In terms of domain architecture, (+)RNA virus helicase ATP-binding spans 2964–3116; sequence QVMKVAQTCA…AFSLMPGRQL (153 aa). 2992 to 2999 is a binding site for ATP; sequence GAPGTGKT. Residues 3117–3248 enclose the (+)RNA virus helicase C-terminal domain; sequence IEVFRFGPAV…CGDQPKMIVG (132 aa). Residues 3272-3368 enclose the AV-Nsp11N/CoV-Nsp15M domain; it reads EGTASPLPQV…LTKYLKGESV (97 aa). Residues 3370–3492 form the NendoU domain; that stretch reads LPDSIMSTGR…MVWKDATAYF (123 aa).

The protein belongs to the arteriviridae polyprotein family. Post-translationally, specific enzymatic cleavages in vivo by its own proteases yield mature proteins. There are two alternative pathways for processing. Either nsp4-5 is cleaved, which represents the major pathway or the nsp5-6 and nsp6-7 are processed, which represents the minor pathway. The major pathway occurs when nsp2 acts as a cofactor for nsp4.

The protein localises to the host membrane. It localises to the host cytoplasm. The protein resides in the host perinuclear region. The catalysed reaction is RNA(n) + a ribonucleoside 5'-triphosphate = RNA(n+1) + diphosphate. The enzyme catalyses ATP + H2O = ADP + phosphate + H(+). It catalyses the reaction uridylyl-uridylyl-ribonucleotide-RNA = a 3'-end uridylyl-2',3'-cyclophospho-uridine-RNA + a 5'-end dephospho-ribonucleoside-RNA. Its function is as follows. The replicase polyprotein 1ab is a multifunctional protein: it contains the activities necessary for the transcription of negative stranded RNA, leader RNA, subgenomic mRNAs and progeny virion RNA as well as proteinases responsible for the cleavage of the polyprotein into functional products. The Nsp1 chain is essential for viral subgenomic mRNA synthesis. Functionally, the 3C-like serine proteinase chain is responsible for the majority of cleavages as it cleaves the C-terminus of the polyprotein. In terms of biological role, the helicase chain, which contains a zinc finger structure, displays RNA and DNA duplex-unwinding activities with 5' to 3' polarity. Its function is as follows. Plays a role in viral transcription/replication and prevents the simultaneous activation of host cell dsRNA sensors, such as MDA5/IFIH1, OAS, and PKR. Acts by degrading the 5'-polyuridines generated during replication of the poly(A) region of viral genomic and subgenomic RNAs. Catalyzes a two-step reaction in which a 2'3'-cyclic phosphate (2'3'-cP) is first generated by 2'-O transesterification, which is then hydrolyzed to a 3'-phosphate (3'-P). If not degraded, poly(U) RNA would hybridize with poly(A) RNA tails and activate host dsRNA sensors. This chain is Replicase polyprotein 1ab (rep), found in Mus musculus domesticus (western European house mouse).